The following is a 598-amino-acid chain: Aspartate--tRNA(Asp/Asn) ligase (598 aa).

E177 is an L-aspartate binding site. The tract at residues 201 to 204 (QLFK) is aspartate. Residue R223 participates in L-aspartate binding. ATP is bound by residues 223 to 225 (RDE) and Q232. An L-aspartate-binding site is contributed by H456. E493 provides a ligand contact to ATP. R500 contacts L-aspartate. 545–548 (GVDR) serves as a coordination point for ATP.

It belongs to the class-II aminoacyl-tRNA synthetase family. Type 1 subfamily. As to quaternary structure, homodimer.

The protein localises to the cytoplasm. The enzyme catalyses tRNA(Asx) + L-aspartate + ATP = L-aspartyl-tRNA(Asx) + AMP + diphosphate. Aspartyl-tRNA synthetase with relaxed tRNA specificity since it is able to aspartylate not only its cognate tRNA(Asp) but also tRNA(Asn). Reaction proceeds in two steps: L-aspartate is first activated by ATP to form Asp-AMP and then transferred to the acceptor end of tRNA(Asp/Asn). In Prochlorococcus marinus subsp. pastoris (strain CCMP1986 / NIES-2087 / MED4), this protein is Aspartate--tRNA(Asp/Asn) ligase.